A 209-amino-acid polypeptide reads, in one-letter code: Probable nicotinate-nucleotide adenylyltransferase (209 aa).

This sequence belongs to the NadD family.

It catalyses the reaction nicotinate beta-D-ribonucleotide + ATP + H(+) = deamido-NAD(+) + diphosphate. The protein operates within cofactor biosynthesis; NAD(+) biosynthesis; deamido-NAD(+) from nicotinate D-ribonucleotide: step 1/1. Functionally, catalyzes the reversible adenylation of nicotinate mononucleotide (NaMN) to nicotinic acid adenine dinucleotide (NaAD). In Idiomarina loihiensis (strain ATCC BAA-735 / DSM 15497 / L2-TR), this protein is Probable nicotinate-nucleotide adenylyltransferase.